The chain runs to 397 residues: Chorismate synthase (397 aa).

NADP(+)-binding residues include Arg-40 and Arg-46. FMN-binding positions include Arg-129–Ser-131, Gln-257–Ala-258, Gly-302, Lys-317–Ser-321, and Arg-343.

It belongs to the chorismate synthase family. Homotetramer. FMNH2 is required as a cofactor.

It catalyses the reaction 5-O-(1-carboxyvinyl)-3-phosphoshikimate = chorismate + phosphate. It functions in the pathway metabolic intermediate biosynthesis; chorismate biosynthesis; chorismate from D-erythrose 4-phosphate and phosphoenolpyruvate: step 7/7. Its function is as follows. Catalyzes the anti-1,4-elimination of the C-3 phosphate and the C-6 proR hydrogen from 5-enolpyruvylshikimate-3-phosphate (EPSP) to yield chorismate, which is the branch point compound that serves as the starting substrate for the three terminal pathways of aromatic amino acid biosynthesis. This reaction introduces a second double bond into the aromatic ring system. This chain is Chorismate synthase, found in Chlorobaculum tepidum (strain ATCC 49652 / DSM 12025 / NBRC 103806 / TLS) (Chlorobium tepidum).